We begin with the raw amino-acid sequence, 294 residues long: ATP synthase gamma chain (294 aa).

It belongs to the ATPase gamma chain family. As to quaternary structure, F-type ATPases have 2 components, CF(1) - the catalytic core - and CF(0) - the membrane proton channel. CF(1) has five subunits: alpha(3), beta(3), gamma(1), delta(1), epsilon(1). CF(0) has three main subunits: a, b and c.

The protein localises to the cell inner membrane. Produces ATP from ADP in the presence of a proton gradient across the membrane. The gamma chain is believed to be important in regulating ATPase activity and the flow of protons through the CF(0) complex. This chain is ATP synthase gamma chain, found in Paraburkholderia phytofirmans (strain DSM 17436 / LMG 22146 / PsJN) (Burkholderia phytofirmans).